The primary structure comprises 596 residues: Aspartate--tRNA(Asp/Asn) ligase (596 aa).

Residue Glu-172 participates in L-aspartate binding. An aspartate region spans residues 196 to 199; sequence QLFK. Arg-218 is an L-aspartate binding site. ATP is bound by residues 218 to 220 and Gln-227; that span reads RDE. Residue His-450 participates in L-aspartate binding. ATP is bound at residue Glu-484. L-aspartate is bound at residue Arg-491. Residue 536–539 coordinates ATP; the sequence is GLDR.

The protein belongs to the class-II aminoacyl-tRNA synthetase family. Type 1 subfamily. Homodimer.

It is found in the cytoplasm. The catalysed reaction is tRNA(Asx) + L-aspartate + ATP = L-aspartyl-tRNA(Asx) + AMP + diphosphate. Its function is as follows. Aspartyl-tRNA synthetase with relaxed tRNA specificity since it is able to aspartylate not only its cognate tRNA(Asp) but also tRNA(Asn). Reaction proceeds in two steps: L-aspartate is first activated by ATP to form Asp-AMP and then transferred to the acceptor end of tRNA(Asp/Asn). This Acidithiobacillus ferrooxidans (strain ATCC 23270 / DSM 14882 / CIP 104768 / NCIMB 8455) (Ferrobacillus ferrooxidans (strain ATCC 23270)) protein is Aspartate--tRNA(Asp/Asn) ligase.